Here is a 202-residue protein sequence, read N- to C-terminus: Pyridoxal 5'-phosphate synthase subunit PdxT (202 aa).

Position 50-52 (50-52 (GES)) interacts with L-glutamine. The Nucleophile role is filled by Cys82. Residues Arg111 and 140–141 (IR) contribute to the L-glutamine site. Catalysis depends on charge relay system residues His176 and Glu178.

This sequence belongs to the glutaminase PdxT/SNO family. In terms of assembly, in the presence of PdxS, forms a dodecamer of heterodimers. Only shows activity in the heterodimer.

It catalyses the reaction aldehydo-D-ribose 5-phosphate + D-glyceraldehyde 3-phosphate + L-glutamine = pyridoxal 5'-phosphate + L-glutamate + phosphate + 3 H2O + H(+). It carries out the reaction L-glutamine + H2O = L-glutamate + NH4(+). It functions in the pathway cofactor biosynthesis; pyridoxal 5'-phosphate biosynthesis. In terms of biological role, catalyzes the hydrolysis of glutamine to glutamate and ammonia as part of the biosynthesis of pyridoxal 5'-phosphate. The resulting ammonia molecule is channeled to the active site of PdxS. This Streptomyces coelicolor (strain ATCC BAA-471 / A3(2) / M145) protein is Pyridoxal 5'-phosphate synthase subunit PdxT.